The primary structure comprises 268 residues: Bis(5'-nucleosyl)-tetraphosphatase, symmetrical (268 aa).

Belongs to the Ap4A hydrolase family.

It carries out the reaction P(1),P(4)-bis(5'-adenosyl) tetraphosphate + H2O = 2 ADP + 2 H(+). Its function is as follows. Hydrolyzes diadenosine 5',5'''-P1,P4-tetraphosphate to yield ADP. In Vibrio parahaemolyticus serotype O3:K6 (strain RIMD 2210633), this protein is Bis(5'-nucleosyl)-tetraphosphatase, symmetrical.